The chain runs to 177 residues: Cytochrome c oxidase assembly protein CtaG (177 aa).

Residues 1-8 (MTQKAKNT) lie on the Cytoplasmic side of the membrane. A helical; Signal-anchor for type II membrane protein transmembrane segment spans residues 9–29 (IYLLILIILSMLCLVYASVPL). Residues 30–177 (YSIFCKVTGY…TFFKYKENTK (148 aa)) are Periplasmic-facing.

Belongs to the COX11/CtaG family.

The protein resides in the cell inner membrane. Its function is as follows. Exerts its effect at some terminal stage of cytochrome c oxidase synthesis, probably by being involved in the insertion of the copper B into subunit I. The chain is Cytochrome c oxidase assembly protein CtaG from Ehrlichia ruminantium (strain Welgevonden).